The primary structure comprises 452 residues: Keratin, type I cytoskeletal 42 (452 aa).

The segment at 4–93 (TTSIRQFSTS…GVSDALLGGS (90 aa)) is head. 2 coiled-coil regions span residues 93–132 (SEKE…WYKK) and 188–407 (NLRM…HLAT). Residues 94–129 (EKETMQNLNDRLATYLDRVRALEEANTDLEVKIREW) form a coil 1A region. Residues 94-405 (EKETMQNLND…RLLEGEDAHL (312 aa)) enclose the IF rod domain. The linker 1 stretch occupies residues 130–147 (YKKQGPGPARDYSPYFKT). The coil 1B stretch occupies residues 148–239 (IEDLRNKILA…KNHEEEMNAL (92 aa)). Positions 240 to 262 (RGQVGGDVNVEMDAAPGVDLSRI) are linker 12. Residues 263 to 401 (LNEMRDQYEK…ATYRRLLEGE (139 aa)) form a coil 2 region. A tail region spans residues 402-452 (DAHLATQYSSSLASQASREGTVTSRQVRTIVEEVQDGKVVSSREQVHRSTH).

This sequence belongs to the intermediate filament family. Heterodimer of a type I and a type II keratin. Colocalizes with KRT8/KRT18 filament network.

It localises to the cytoplasm. The chain is Keratin, type I cytoskeletal 42 from Rattus norvegicus (Rat).